The following is a 720-amino-acid chain: ATP-dependent DNA helicase Hel308 (720 aa).

Residues serine 23, glutamine 28, and 46–53 (IPTASGKT) each bind ATP. A Helicase ATP-binding domain is found at 33-197 (KSGILEGKNA…WLNAELIVSD (165 aa)). The short motif at 145–148 (DEIH) is the DEAH box element. The Helicase C-terminal domain occupies 229 to 422 (LVYDAIRKKK…NLRSQVLALI (194 aa)).

Belongs to the helicase family. Hel308 subfamily. As to quaternary structure, monomer. Interacts with PCNA. Mg(2+) is required as a cofactor. It depends on Zn(2+) as a cofactor.

The enzyme catalyses Couples ATP hydrolysis with the unwinding of duplex DNA by translocating in the 3'-5' direction.. It carries out the reaction ATP + H2O = ADP + phosphate + H(+). In terms of biological role, DNA-dependent ATPase and 3'-5' DNA helicase that may be involved in repair of stalled replication forks. Unwinds the lagging strand from forked DNA structures in a 3'-5' direction. PCNA, the DNA polymerase sliding clamp subunit, stimulates the helicase activity, and may alter substrate specificity. Unwinds branched DNA (Holliday junctions) in an ATP-dependent fashion; ss- and dsDNA stimulate ATPase to the greatest extent, although it preferentially binds DNA with a single-stranded region. Processes a RecA-mediated recombination intermediate between gapped circular and homologous linear dsDNA. This Pyrococcus furiosus (strain ATCC 43587 / DSM 3638 / JCM 8422 / Vc1) protein is ATP-dependent DNA helicase Hel308.